The primary structure comprises 749 residues: Formate acetyltransferase (749 aa).

Positions 3–619 constitute a PFL domain; the sequence is ETNKNHATAW…KTGNTPDGRK (617 aa). C413 acts as the S-acetylcysteine intermediate in catalysis. C414 serves as the catalytic Cysteine radical intermediate. The region spanning 626–749 is the Glycine radical domain; sequence PGANPMHGRD…VISRTFHESM (124 aa). At G724 the chain carries Glycine radical.

This sequence belongs to the glycyl radical enzyme (GRE) family. PFL subfamily. In terms of assembly, homodimer.

The protein resides in the cytoplasm. It catalyses the reaction formate + acetyl-CoA = pyruvate + CoA. The protein operates within fermentation; pyruvate fermentation; formate from pyruvate: step 1/1. Functionally, catalyzes the conversion of pyruvate to formate and acetyl-CoA. The protein is Formate acetyltransferase (pflB) of Staphylococcus aureus (strain USA300).